The chain runs to 325 residues: Elongation factor P--(R)-beta-lysine ligase (325 aa).

76 to 78 (SPE) contacts substrate. ATP contacts are provided by residues 100–102 (RNE) and asparagine 109. Tyrosine 118 is a binding site for substrate. Residue 244-245 (EL) participates in ATP binding. Glutamate 251 contacts substrate. Glycine 300 is a binding site for ATP.

It belongs to the class-II aminoacyl-tRNA synthetase family. EpmA subfamily. In terms of assembly, homodimer.

The enzyme catalyses D-beta-lysine + L-lysyl-[protein] + ATP = N(6)-((3R)-3,6-diaminohexanoyl)-L-lysyl-[protein] + AMP + diphosphate + H(+). In terms of biological role, with EpmB is involved in the beta-lysylation step of the post-translational modification of translation elongation factor P (EF-P) on 'Lys-34'. Catalyzes the ATP-dependent activation of (R)-beta-lysine produced by EpmB, forming a lysyl-adenylate, from which the beta-lysyl moiety is then transferred to the epsilon-amino group of EF-P 'Lys-34'. This Salmonella gallinarum (strain 287/91 / NCTC 13346) protein is Elongation factor P--(R)-beta-lysine ligase.